A 451-amino-acid polypeptide reads, in one-letter code: uncharacterized protein (451 aa).

It to ORF5 in pFZ1.

This is an uncharacterized protein from Methanothermobacter thermautotrophicus (Methanobacterium thermoformicicum).